We begin with the raw amino-acid sequence, 249 residues long: 5'-nucleotidase SurE (249 aa).

Asp-8, Asp-9, Ser-39, and Asn-91 together coordinate a divalent metal cation.

The protein belongs to the SurE nucleotidase family. The cofactor is a divalent metal cation.

The protein resides in the cytoplasm. It carries out the reaction a ribonucleoside 5'-phosphate + H2O = a ribonucleoside + phosphate. Nucleotidase that shows phosphatase activity on nucleoside 5'-monophosphates. This chain is 5'-nucleotidase SurE, found in Haemophilus influenzae (strain PittGG).